Consider the following 55-residue polypeptide: HTH-type transcriptional regulator MerD (55 aa).

One can recognise an HTH merR-type domain in the interval 3–55 (AYTVSRLALDAGVSVHIVRDYLLRGLLRPVACTPGGYGLFDDAALQRLCFVRA). Positions 6–25 (VSRLALDAGVSVHIVRDYLL) form a DNA-binding region, H-T-H motif.

The protein is HTH-type transcriptional regulator MerD (merD) of Pseudomonas fluorescens.